A 216-amino-acid chain; its full sequence is MNYTVDDQNMAFISQLYPDVYTQIVQPGEVKQPKRRRKKTKGSVASADGGNGLFRKRKLTDEQVNMLEMSFGDEHKLESERKDRLAAELGLDPRQVAVWFQNRRARWKNKRLEEEYNKLKNSHDNVVVDKCRLESEVIQLKEQLYDAEREIQRLAERVEGGSSNSPISSSVSVEANETPFFGDYKVGDDGDDYDHLFYPVPENSYIDEAEWMSLYI.

Positions 28–52 are disordered; that stretch reads GEVKQPKRRRKKTKGSVASADGGNG. A DNA-binding region (homeobox) is located at residues 52 to 111; the sequence is GLFRKRKLTDEQVNMLEMSFGDEHKLESERKDRLAAELGLDPRQVAVWFQNRRARWKNKR. The tract at residues 112 to 140 is leucine-zipper; it reads LEEEYNKLKNSHDNVVVDKCRLESEVIQL.

Belongs to the HD-ZIP homeobox family. Class I subfamily. As to expression, expressed in roots, flowers and siliques.

Its subcellular location is the nucleus. Its function is as follows. Probable transcription factor. The sequence is that of Homeobox-leucine zipper protein ATHB-40 (ATHB-40) from Arabidopsis thaliana (Mouse-ear cress).